Reading from the N-terminus, the 248-residue chain is Octanoyltransferase (248 aa).

Positions 53 to 238 (ADTGDEIWVV…NLDGASAAAD (186 aa)) constitute a BPL/LPL catalytic domain. Substrate contacts are provided by residues 93–100 (RGGQITYH), 165–167 (ALG), and 178–180 (GLS). The active-site Acyl-thioester intermediate is Cys-196.

This sequence belongs to the LipB family.

The protein localises to the cytoplasm. The catalysed reaction is octanoyl-[ACP] + L-lysyl-[protein] = N(6)-octanoyl-L-lysyl-[protein] + holo-[ACP] + H(+). It functions in the pathway protein modification; protein lipoylation via endogenous pathway; protein N(6)-(lipoyl)lysine from octanoyl-[acyl-carrier-protein]: step 1/2. In terms of biological role, catalyzes the transfer of endogenously produced octanoic acid from octanoyl-acyl-carrier-protein onto the lipoyl domains of lipoate-dependent enzymes. Lipoyl-ACP can also act as a substrate although octanoyl-ACP is likely to be the physiological substrate. The polypeptide is Octanoyltransferase (Burkholderia orbicola (strain MC0-3)).